Here is a 144-residue protein sequence, read N- to C-terminus: Ribosome maturation factor RimP (144 aa).

It belongs to the RimP family.

The protein resides in the cytoplasm. Functionally, required for maturation of 30S ribosomal subunits. This Azoarcus sp. (strain BH72) protein is Ribosome maturation factor RimP.